A 105-amino-acid chain; its full sequence is MMLKPSIDTLLDKVPSKYSLVILQAKRAHELEAGATPTQAFKSVKSTLQALEEIESGNVVIHPDPAAKRAAVRARIEAERLAREEEERKIKEQIAKEKEEEGEKI.

It belongs to the RNA polymerase subunit omega family. The RNAP catalytic core consists of 2 alpha, 1 beta, 1 beta' and 1 omega subunit. When a sigma factor is associated with the core the holoenzyme is formed, which can initiate transcription.

The enzyme catalyses RNA(n) + a ribonucleoside 5'-triphosphate = RNA(n+1) + diphosphate. In terms of biological role, promotes RNA polymerase assembly. Latches the N- and C-terminal regions of the beta' subunit thereby facilitating its interaction with the beta and alpha subunits. The protein is DNA-directed RNA polymerase subunit omega of Streptococcus equi subsp. zooepidemicus (strain MGCS10565).